Here is a 347-residue protein sequence, read N- to C-terminus: DnaJ homolog subfamily C member 22 (347 aa).

In terms of domain architecture, TM2 spans 4–50 (GLLMTYTLWAVGGPAGLHHLYLGRDSHALLWMLTLGGGGLGWLWEFW). 7 helical membrane passes run 5–25 (LLMTYTLWAVGGPAGLHHLYL), 32–52 (LLWMLTLGGGGLGWLWEFWML), 81–101 (FVAQMIVGMYFGLVALISLSF), 105–125 (FYIVGLPLAVGLGVLLVAAVG), 135–155 (LGAAFLTSPIFYGRPIAILPI), 186–206 (GLAYLAFTGPLVHSVLCHTAV), and 218–238 (FLSWFSFFPLLGRLLESVLLL). In terms of domain architecture, J spans 277–347 (LALQVFGLSE…GSWRWEETSF (71 aa)).

The protein localises to the membrane. Functionally, may function as a co-chaperone. This is DnaJ homolog subfamily C member 22 (DNAJC22) from Bos taurus (Bovine).